Consider the following 772-residue polypeptide: Nudix hydrolase 3 (772 aa).

Residues 1–14 show a composition bias toward basic and acidic residues; that stretch reads MAEEHFDVLTKSGE. Positions 1-25 are disordered; sequence MAEEHFDVLTKSGEKTGVSKPRGEV. A Nudix hydrolase domain is found at 30 to 172; sequence DYHRAVHVWI…DPAYVPYDVN (143 aa). The Nudix box motif lies at 69–90; it reads GHISAGDTSLLSAQRELEEELG. 2 residues coordinate Mg(2+): glutamate 84 and glutamate 88.

It belongs to the Nudix hydrolase family. Requires Mg(2+) as cofactor. It depends on Mn(2+) as a cofactor. As to expression, expressed in roots, stems and, at lower level, leaves.

In terms of biological role, probably mediates the hydrolysis of some nucleoside diphosphate derivatives. The polypeptide is Nudix hydrolase 3 (NUDT3) (Arabidopsis thaliana (Mouse-ear cress)).